Consider the following 326-residue polypeptide: Ribosomal RNA small subunit methyltransferase H (326 aa).

Residues 45–47, D65, D113, and Q120 each bind S-adenosyl-L-methionine; that span reads GGH. A disordered region spans residues 299 to 326; that stretch reads PSAEEITRNPRSRSARLRAAERIAHDGR. Over residues 316 to 326 the composition is skewed to basic and acidic residues; it reads RAAERIAHDGR.

The protein belongs to the methyltransferase superfamily. RsmH family.

The protein localises to the cytoplasm. The catalysed reaction is cytidine(1402) in 16S rRNA + S-adenosyl-L-methionine = N(4)-methylcytidine(1402) in 16S rRNA + S-adenosyl-L-homocysteine + H(+). Specifically methylates the N4 position of cytidine in position 1402 (C1402) of 16S rRNA. This chain is Ribosomal RNA small subunit methyltransferase H, found in Thermomicrobium roseum (strain ATCC 27502 / DSM 5159 / P-2).